We begin with the raw amino-acid sequence, 226 residues long: 2-C-methyl-D-erythritol 4-phosphate cytidylyltransferase (226 aa).

Belongs to the IspD/TarI cytidylyltransferase family. IspD subfamily.

The enzyme catalyses 2-C-methyl-D-erythritol 4-phosphate + CTP + H(+) = 4-CDP-2-C-methyl-D-erythritol + diphosphate. It functions in the pathway isoprenoid biosynthesis; isopentenyl diphosphate biosynthesis via DXP pathway; isopentenyl diphosphate from 1-deoxy-D-xylulose 5-phosphate: step 2/6. Catalyzes the formation of 4-diphosphocytidyl-2-C-methyl-D-erythritol from CTP and 2-C-methyl-D-erythritol 4-phosphate (MEP). This chain is 2-C-methyl-D-erythritol 4-phosphate cytidylyltransferase, found in Prochlorococcus marinus (strain SARG / CCMP1375 / SS120).